Reading from the N-terminus, the 370-residue chain is Chorismate synthase (370 aa).

NADP(+) is bound at residue arginine 47. Residues 124–126 (RSS), glycine 286, 301–305 (KPTAT), and arginine 327 each bind FMN.

This sequence belongs to the chorismate synthase family. As to quaternary structure, homotetramer. FMNH2 is required as a cofactor.

The catalysed reaction is 5-O-(1-carboxyvinyl)-3-phosphoshikimate = chorismate + phosphate. The protein operates within metabolic intermediate biosynthesis; chorismate biosynthesis; chorismate from D-erythrose 4-phosphate and phosphoenolpyruvate: step 7/7. Its function is as follows. Catalyzes the anti-1,4-elimination of the C-3 phosphate and the C-6 proR hydrogen from 5-enolpyruvylshikimate-3-phosphate (EPSP) to yield chorismate, which is the branch point compound that serves as the starting substrate for the three terminal pathways of aromatic amino acid biosynthesis. This reaction introduces a second double bond into the aromatic ring system. This chain is Chorismate synthase, found in Trichodesmium erythraeum (strain IMS101).